Consider the following 65-residue polypeptide: Prokaryotic ubiquitin-like protein Pup (65 aa).

The segment covering 1–14 has biased composition (basic and acidic residues); it reads MSGHEQQRPSRREE. The segment at 1-35 is disordered; that stretch reads MSGHEQQRPSRREEDVEETPVVPAQAGAQAKESDA. Positions 21–59 are ARC ATPase binding; the sequence is VVPAQAGAQAKESDADVDALLDEIDEVLESNSEEFVRGF. Residues 26 to 49 adopt a coiled-coil conformation; the sequence is AGAQAKESDADVDALLDEIDEVLE. Gln65 is modified (deamidated glutamine). An Isoglutamyl lysine isopeptide (Gln-Lys) (interchain with K-? in acceptor proteins) cross-link involves residue Gln65.

Belongs to the prokaryotic ubiquitin-like protein family. Strongly interacts with the proteasome-associated ATPase ARC through a hydrophobic interface; the interacting region of Pup lies in its C-terminal half. There is one Pup binding site per ARC hexamer ring. In terms of processing, is modified by deamidation of its C-terminal glutamine to glutamate by the deamidase Dop, a prerequisite to the subsequent pupylation process.

It participates in protein degradation; proteasomal Pup-dependent pathway. Protein modifier that is covalently attached to lysine residues of substrate proteins, thereby targeting them for proteasomal degradation. The tagging system is termed pupylation. The sequence is that of Prokaryotic ubiquitin-like protein Pup from Kineococcus radiotolerans (strain ATCC BAA-149 / DSM 14245 / SRS30216).